The following is a 133-amino-acid chain: Small ribosomal subunit protein uS8c (133 aa).

It belongs to the universal ribosomal protein uS8 family. Part of the 30S ribosomal subunit.

Its subcellular location is the plastid. The protein resides in the chloroplast. In terms of biological role, one of the primary rRNA binding proteins, it binds directly to 16S rRNA central domain where it helps coordinate assembly of the platform of the 30S subunit. This chain is Small ribosomal subunit protein uS8c (rps8), found in Cyanidium caldarium (Red alga).